Reading from the N-terminus, the 392-residue chain is MSTPSIVIASARTAVGSFNGAFANTPAHELGATVISAVLERAGVAAGEVNEVILGQVLPAGEGQNPARQAAMKAGVPQEATAWGMNQLCGSGLRAVALGMQQIATGDASIIVAGGMESMSMAPHCAHLAGGVKMGDFKMIDTMIKDGLTDAFYGYHMGTTAENVAKQWQLSRDEQDAFAVASQNKAEAAQKDGRFKDEIVPFIVKGRKGDITVDADEYIRHGATLDSMAKLRPAFDKEGTVTAGNASGLNDGAAAALLMSEAEASRRGIQPLGRIVSWATVGVDPKVMGTGPIPASRKALERAGWKIGDLDLVEANEAFAAQACAVNKDLGWDPSIVNVNGGAIAIGHPIGASGARILNTLLFEMKRRGARKGLATLCIGGGMGVAMCIESL.

Cysteine 89 functions as the Acyl-thioester intermediate in the catalytic mechanism. Residues histidine 348 and cysteine 378 each act as proton acceptor in the active site.

The protein belongs to the thiolase-like superfamily. Thiolase family. Homotetramer.

It localises to the cytoplasm. The enzyme catalyses 2 acetyl-CoA = acetoacetyl-CoA + CoA. Its pathway is biopolymer metabolism; poly-(R)-3-hydroxybutanoate biosynthesis. It functions in the pathway metabolic intermediate biosynthesis; (R)-mevalonate biosynthesis; (R)-mevalonate from acetyl-CoA: step 1/3. The protein is Acetyl-CoA acetyltransferase of Shinella zoogloeoides (Crabtreella saccharophila).